Here is a 206-residue protein sequence, read N- to C-terminus: A-type ATP synthase subunit D (206 aa).

This sequence belongs to the V-ATPase D subunit family. In terms of assembly, has multiple subunits with at least A(3), B(3), C, D, E, F, H, I and proteolipid K(x).

It localises to the cell membrane. Functionally, component of the A-type ATP synthase that produces ATP from ADP in the presence of a proton gradient across the membrane. In Methanococcoides burtonii (strain DSM 6242 / NBRC 107633 / OCM 468 / ACE-M), this protein is A-type ATP synthase subunit D.